The following is a 106-amino-acid chain: PAT complex subunit Asterix (106 aa).

Positions M1 to L29 are disordered. The residue at position 2 (S2) is an N-acetylserine. Residues S2–P32 are Cytoplasmic-facing. A helical membrane pass occupies residues T33 to L51. Residue K52 is a topological domain, lumenal. Residues L53 to N70 form a helical membrane-spanning segment. Residues S71–S74 are Cytoplasmic-facing. A helical membrane pass occupies residues E75–Y95. The Lumenal segment spans residues L96–W106.

The protein belongs to the Asterix family. Component of the PAT complex, composed of WDR83OS/Asterix and CCDC47. The PAT complex is part of the multi-pass translocon (MPT) complex, composed of three subcomplexes, the GEL complex (composed of RAB5IF/OPTI and TMCO1), the BOS complex (composed of NCLN/Nicalin, NOMO1 and TMEM147) and the PAT complex (composed of WDR83OS/Asterix and CCDC47). The MPT complex associates with the SEC61 complex.

It localises to the endoplasmic reticulum membrane. Component of the multi-pass translocon (MPT) complex that mediates insertion of multi-pass membrane proteins into the lipid bilayer of membranes. The MPT complex takes over after the SEC61 complex: following membrane insertion of the first few transmembrane segments of proteins by the SEC61 complex, the MPT complex occludes the lateral gate of the SEC61 complex to promote insertion of subsequent transmembrane regions. Within the MPT complex, the PAT subcomplex sequesters any highly polar regions in the transmembrane domains away from the non-polar membrane environment until they can be buried in the interior of the fully assembled protein. Within the PAT subcomplex, WDR83OS/Asterix binds to and redirects the substrate to a location behind the SEC61 complex. This chain is PAT complex subunit Asterix (WDR83OS), found in Bos taurus (Bovine).